Reading from the N-terminus, the 895-residue chain is Histone-lysine N-methyltransferase EZ3 (895 aa).

The span at 1–13 shows a compositional bias: low complexity; it reads MASSSKASDSSSQ. Disordered regions lie at residues 1–30 and 396–446; these read MASSSKASDSSSQRSKRSDQGTGREAAPAS and SSVS…PGKR. Positions 396-422 are enriched in polar residues; sequence SSVSAEESTTPPSADTSETENASSDMP. Basic residues predominate over residues 427-436; the sequence is RKYKISKRGP. In terms of domain architecture, SANT spans 528–578; it reads TLSCWSALERDLYLKGIEIFGKNSCLIARNLLSGMKTCMEVANYMYNNGAA. In terms of domain architecture, CXC spans 628 to 732; the sequence is AGHPTVRKRI…SLGEPPARGD (105 aa). Residues 747 to 862 form the SET domain; it reads QRILLGRSDV…ASEELFYDYR (116 aa). Residues 870–895 form a disordered region; the sequence is AWARRPEGSKKDEASVSHHRAHKVAR. Over residues 873-885 the composition is skewed to basic and acidic residues; the sequence is RRPEGSKKDEASV. Basic residues predominate over residues 886–895; sequence SHHRAHKVAR.

It belongs to the class V-like SAM-binding methyltransferase superfamily. Histone-lysine methyltransferase family. EZ subfamily. In terms of tissue distribution, widely expressed.

It is found in the nucleus. It catalyses the reaction L-lysyl(27)-[histone H3] + 3 S-adenosyl-L-methionine = N(6),N(6),N(6)-trimethyl-L-lysyl(27)-[histone H3] + 3 S-adenosyl-L-homocysteine + 3 H(+). Polycomb group (PcG) protein. Catalytic subunit of some PcG multiprotein complex, which methylates 'Lys-27' of histone H3, leading to transcriptional repression of the affected target genes. PcG proteins are not required to initiate repression, but to maintain it during later stages of development. This is Histone-lysine N-methyltransferase EZ3 (EZ3) from Zea mays (Maize).